Reading from the N-terminus, the 371-residue chain is Carnitine monooxygenase oxygenase subunit (371 aa).

The Rieske domain maps to 44–152 (WICVAHSSEL…VEEYAGFLFI (109 aa)). Residues C86, H88, C106, and H109 each contribute to the [2Fe-2S] cluster site. Fe cation-binding residues include H208, H213, and D323.

The protein belongs to the bacterial ring-hydroxylating dioxygenase alpha subunit family. CntA subfamily. Composed of an oxygenase subunit (cntA) and a reductase subunit (cntB). [2Fe-2S] cluster serves as cofactor. Requires Fe cation as cofactor.

It catalyses the reaction (R)-carnitine + NADH + O2 + H(+) = (3R)-3-hydroxy-4-oxobutanoate + trimethylamine + NAD(+) + H2O. The enzyme catalyses (R)-carnitine + NADPH + O2 + H(+) = (3R)-3-hydroxy-4-oxobutanoate + trimethylamine + NADP(+) + H2O. The protein operates within amine and polyamine metabolism; carnitine metabolism. Its function is as follows. Converts carnitine to trimethylamine and malic semialdehyde. The chain is Carnitine monooxygenase oxygenase subunit from Acinetobacter baumannii (strain ATCC 19606 / DSM 30007 / JCM 6841 / CCUG 19606 / CIP 70.34 / NBRC 109757 / NCIMB 12457 / NCTC 12156 / 81).